Reading from the N-terminus, the 322-residue chain is Ferredoxin--NADP reductase (322 aa).

The FAD site is built by Asp-34, Gln-42, Tyr-47, Val-87, Phe-120, Asp-279, and Thr-320.

It belongs to the ferredoxin--NADP reductase type 2 family. In terms of assembly, homodimer. FAD serves as cofactor.

The catalysed reaction is 2 reduced [2Fe-2S]-[ferredoxin] + NADP(+) + H(+) = 2 oxidized [2Fe-2S]-[ferredoxin] + NADPH. The sequence is that of Ferredoxin--NADP reductase from Streptococcus sanguinis (strain SK36).